We begin with the raw amino-acid sequence, 510 residues long: Light-independent protochlorophyllide reductase subunit B (510 aa).

D36 serves as a coordination point for [4Fe-4S] cluster. The Proton donor role is filled by D296. Substrate is bound at residue 431-432; it reads GM.

The protein belongs to the ChlB/BchB/BchZ family. Protochlorophyllide reductase is composed of three subunits; ChlL, ChlN and ChlB. Forms a heterotetramer of two ChlB and two ChlN subunits. [4Fe-4S] cluster is required as a cofactor.

The protein localises to the plastid. It is found in the chloroplast. The enzyme catalyses chlorophyllide a + oxidized 2[4Fe-4S]-[ferredoxin] + 2 ADP + 2 phosphate = protochlorophyllide a + reduced 2[4Fe-4S]-[ferredoxin] + 2 ATP + 2 H2O. It participates in porphyrin-containing compound metabolism; chlorophyll biosynthesis (light-independent). Functionally, component of the dark-operative protochlorophyllide reductase (DPOR) that uses Mg-ATP and reduced ferredoxin to reduce ring D of protochlorophyllide (Pchlide) to form chlorophyllide a (Chlide). This reaction is light-independent. The NB-protein (ChlN-ChlB) is the catalytic component of the complex. In Stigeoclonium helveticum (Green alga), this protein is Light-independent protochlorophyllide reductase subunit B.